A 271-amino-acid polypeptide reads, in one-letter code: Putative carboxymethylenebutenolidase (271 aa).

Active-site residues include cysteine 147, aspartate 204, and histidine 236.

This sequence belongs to the dienelactone hydrolase family.

It catalyses the reaction 2-(5-oxo-2,5-dihydrofuran-2-ylidene)acetate + H2O = 4-oxohex-2-enedioate + H(+). In Escherichia coli O157:H7, this protein is Putative carboxymethylenebutenolidase (ysgA).